An 89-amino-acid polypeptide reads, in one-letter code: Putative regulatory protein PCC8801_0196 (89 aa).

Belongs to the RemA family.

The protein is Putative regulatory protein PCC8801_0196 of Rippkaea orientalis (strain PCC 8801 / RF-1) (Cyanothece sp. (strain PCC 8801)).